The following is a 61-amino-acid chain: Small ribosomal subunit protein uS14 (61 aa).

C24, C27, C40, and C43 together coordinate Zn(2+).

It belongs to the universal ribosomal protein uS14 family. Zinc-binding uS14 subfamily. As to quaternary structure, part of the 30S ribosomal subunit. Contacts proteins S3 and S10. Requires Zn(2+) as cofactor.

Its function is as follows. Binds 16S rRNA, required for the assembly of 30S particles and may also be responsible for determining the conformation of the 16S rRNA at the A site. The polypeptide is Small ribosomal subunit protein uS14 (Campylobacter fetus subsp. fetus (strain 82-40)).